Reading from the N-terminus, the 172-residue chain is Probable metallophosphoesterase MTH_1774 (172 aa).

A divalent metal cation is bound by residues aspartate 8, histidine 10, aspartate 37, asparagine 59, histidine 85, histidine 113, and histidine 115.

This sequence belongs to the metallophosphoesterase superfamily. YfcE family. A divalent metal cation is required as a cofactor.

This chain is Probable metallophosphoesterase MTH_1774, found in Methanothermobacter thermautotrophicus (strain ATCC 29096 / DSM 1053 / JCM 10044 / NBRC 100330 / Delta H) (Methanobacterium thermoautotrophicum).